The chain runs to 110 residues: Protein RnfH (110 aa).

The interval R86 to N110 is disordered. Over residues K94–N110 the composition is skewed to basic and acidic residues.

This sequence belongs to the UPF0125 (RnfH) family.

The sequence is that of Protein RnfH from Mannheimia succiniciproducens (strain KCTC 0769BP / MBEL55E).